The chain runs to 292 residues: NAD kinase (292 aa).

The Proton acceptor role is filled by aspartate 73. NAD(+)-binding positions include 73–74, 147–148, histidine 158, arginine 175, aspartate 177, 188–193, and glutamine 247; these read DG, NE, and TAYSLS.

It belongs to the NAD kinase family. A divalent metal cation is required as a cofactor.

It is found in the cytoplasm. The enzyme catalyses NAD(+) + ATP = ADP + NADP(+) + H(+). Involved in the regulation of the intracellular balance of NAD and NADP, and is a key enzyme in the biosynthesis of NADP. Catalyzes specifically the phosphorylation on 2'-hydroxyl of the adenosine moiety of NAD to yield NADP. This Sodalis glossinidius (strain morsitans) protein is NAD kinase.